The sequence spans 346 residues: Phenylalanine--tRNA ligase alpha subunit (346 aa).

A Mg(2+)-binding site is contributed by glutamate 261.

It belongs to the class-II aminoacyl-tRNA synthetase family. Phe-tRNA synthetase alpha subunit type 1 subfamily. Tetramer of two alpha and two beta subunits. It depends on Mg(2+) as a cofactor.

It localises to the cytoplasm. The enzyme catalyses tRNA(Phe) + L-phenylalanine + ATP = L-phenylalanyl-tRNA(Phe) + AMP + diphosphate + H(+). This chain is Phenylalanine--tRNA ligase alpha subunit, found in Dehalococcoides mccartyi (strain ATCC BAA-2100 / JCM 16839 / KCTC 5957 / BAV1).